Consider the following 337-residue polypeptide: UDP-N-acetylenolpyruvoylglucosamine reductase (337 aa).

Residues I17–R186 enclose the FAD-binding PCMH-type domain. R162 is an active-site residue. The Proton donor role is filled by S237. E333 is a catalytic residue.

The protein belongs to the MurB family. Requires FAD as cofactor.

Its subcellular location is the cytoplasm. It catalyses the reaction UDP-N-acetyl-alpha-D-muramate + NADP(+) = UDP-N-acetyl-3-O-(1-carboxyvinyl)-alpha-D-glucosamine + NADPH + H(+). The protein operates within cell wall biogenesis; peptidoglycan biosynthesis. Its function is as follows. Cell wall formation. In Flavobacterium johnsoniae (strain ATCC 17061 / DSM 2064 / JCM 8514 / BCRC 14874 / CCUG 350202 / NBRC 14942 / NCIMB 11054 / UW101) (Cytophaga johnsonae), this protein is UDP-N-acetylenolpyruvoylglucosamine reductase.